A 26-amino-acid polypeptide reads, in one-letter code: MSPQTETKAKVGFQAGVKDYKLTYYT.

Positions 1–2 are excised as a propeptide; sequence MS. Pro-3 is subject to N-acetylproline.

The protein belongs to the RuBisCO large chain family. Type I subfamily. In terms of assembly, heterohexadecamer of 8 large chains and 8 small chains.

It localises to the plastid. It is found in the chloroplast. It carries out the reaction 2 (2R)-3-phosphoglycerate + 2 H(+) = D-ribulose 1,5-bisphosphate + CO2 + H2O. It catalyses the reaction D-ribulose 1,5-bisphosphate + O2 = 2-phosphoglycolate + (2R)-3-phosphoglycerate + 2 H(+). In terms of biological role, ruBisCO catalyzes two reactions: the carboxylation of D-ribulose 1,5-bisphosphate, the primary event in carbon dioxide fixation, as well as the oxidative fragmentation of the pentose substrate in the photorespiration process. Both reactions occur simultaneously and in competition at the same active site. This is Ribulose bisphosphate carboxylase large chain (rbcL) from Vicia faba (Broad bean).